Here is a 129-residue protein sequence, read N- to C-terminus: Follitropin subunit beta (129 aa).

Residues 1–18 form the signal peptide; the sequence is MKTLQFFFLFCCWKAICC. Intrachain disulfides connect cysteine 21/cysteine 69, cysteine 35/cysteine 84, cysteine 38/cysteine 122, cysteine 46/cysteine 100, cysteine 50/cysteine 102, and cysteine 105/cysteine 112. 2 N-linked (GlcNAc...) asparagine glycosylation sites follow: asparagine 25 and asparagine 42.

It belongs to the glycoprotein hormones subunit beta family. As to quaternary structure, heterodimer. The active follitropin is a heterodimer composed of an alpha chain/CGA shared with other hormones and a unique beta chain/FSHB shown here.

Its subcellular location is the secreted. Functionally, together with the alpha chain CGA constitutes follitropin, the follicle-stimulating hormone, and provides its biological specificity to the hormone heterodimer. Binds FSHR, a G protein-coupled receptor, on target cells to activate downstream signaling pathways. Follitropin is involved in follicle development and spermatogenesis in reproductive organs. This Homo sapiens (Human) protein is Follitropin subunit beta (FSHB).